Reading from the N-terminus, the 741-residue chain is Nuclear pore complex protein Nup88 (741 aa).

The residue at position 2 (A2) is an N-acetylalanine. Residues S35, S50, S379, S437, S442, and S517 each carry the phosphoserine modification. T525 bears the Phosphothreonine mark. Position 540 is a phosphoserine (S540). Positions 585–651 (EEIQRRVKLL…KLLHSFHSEL (67 aa)) form a coiled coil. S698 is subject to Phosphoserine.

As to quaternary structure, interacts with NUP214/CAN. Interacts with NUP62 and NUP98. As to expression, ubiquitous.

It is found in the nucleus. Its subcellular location is the nuclear pore complex. Component of nuclear pore complex. This Homo sapiens (Human) protein is Nuclear pore complex protein Nup88 (NUP88).